The chain runs to 269 residues: Tryptophan synthase alpha chain (269 aa).

Residues E49 and D60 each act as proton acceptor in the active site.

Belongs to the TrpA family. As to quaternary structure, tetramer of two alpha and two beta chains.

The catalysed reaction is (1S,2R)-1-C-(indol-3-yl)glycerol 3-phosphate + L-serine = D-glyceraldehyde 3-phosphate + L-tryptophan + H2O. It functions in the pathway amino-acid biosynthesis; L-tryptophan biosynthesis; L-tryptophan from chorismate: step 5/5. Functionally, the alpha subunit is responsible for the aldol cleavage of indoleglycerol phosphate to indole and glyceraldehyde 3-phosphate. The sequence is that of Tryptophan synthase alpha chain from Buchnera aphidicola subsp. Schlechtendalia chinensis.